The primary structure comprises 491 residues: Cobyric acid synthase (491 aa).

One can recognise a GATase cobBQ-type domain in the interval 250–437 (QLRVVVPVLP…VHGVFDHPQA (188 aa)). The active-site Nucleophile is Cys331. His429 is an active-site residue.

Belongs to the CobB/CobQ family. CobQ subfamily.

It functions in the pathway cofactor biosynthesis; adenosylcobalamin biosynthesis. Functionally, catalyzes amidations at positions B, D, E, and G on adenosylcobyrinic A,C-diamide. NH(2) groups are provided by glutamine, and one molecule of ATP is hydrogenolyzed for each amidation. This is Cobyric acid synthase from Xanthomonas axonopodis pv. citri (strain 306).